Reading from the N-terminus, the 483-residue chain is Glutamyl-tRNA(Gln) amidotransferase subunit A (483 aa).

Catalysis depends on charge relay system residues Lys-75 and Ser-150. Ser-174 acts as the Acyl-ester intermediate in catalysis.

It belongs to the amidase family. GatA subfamily. In terms of assembly, heterotrimer of A, B and C subunits.

The catalysed reaction is L-glutamyl-tRNA(Gln) + L-glutamine + ATP + H2O = L-glutaminyl-tRNA(Gln) + L-glutamate + ADP + phosphate + H(+). Allows the formation of correctly charged Gln-tRNA(Gln) through the transamidation of misacylated Glu-tRNA(Gln) in organisms which lack glutaminyl-tRNA synthetase. The reaction takes place in the presence of glutamine and ATP through an activated gamma-phospho-Glu-tRNA(Gln). In Microcystis aeruginosa (strain NIES-843 / IAM M-2473), this protein is Glutamyl-tRNA(Gln) amidotransferase subunit A.